Consider the following 285-residue polypeptide: Methylamine utilization protein MauF (285 aa).

Helical transmembrane passes span 39-59 (LGGL…LSQT), 63-83 (GVAV…LSTW), 120-140 (AVGA…LGFG), 144-164 (FGAL…QLGF), 184-204 (FPVW…YLTY), 209-229 (ILYL…AILL), and 265-285 (ALLD…FAAL).

The protein localises to the cell membrane. Its pathway is one-carbon metabolism; methylamine degradation. This is Methylamine utilization protein MauF (mauF) from Methylorubrum extorquens (strain ATCC 14718 / DSM 1338 / JCM 2805 / NCIMB 9133 / AM1) (Methylobacterium extorquens).